The primary structure comprises 299 residues: 4-hydroxybenzoate octaprenyltransferase (299 aa).

Transmembrane regions (helical) follow at residues isoleucine 31–leucine 51, tryptophan 54–isoleucine 74, valine 105–leucine 125, glutamine 148–alanine 168, isoleucine 177–methionine 197, phenylalanine 241–glutamine 261, and phenylalanine 277–isoleucine 297.

This sequence belongs to the UbiA prenyltransferase family. Mg(2+) serves as cofactor.

The protein localises to the cell inner membrane. It carries out the reaction all-trans-octaprenyl diphosphate + 4-hydroxybenzoate = 4-hydroxy-3-(all-trans-octaprenyl)benzoate + diphosphate. It functions in the pathway cofactor biosynthesis; ubiquinone biosynthesis. Its function is as follows. Catalyzes the prenylation of para-hydroxybenzoate (PHB) with an all-trans polyprenyl group. Mediates the second step in the final reaction sequence of ubiquinone-8 (UQ-8) biosynthesis, which is the condensation of the polyisoprenoid side chain with PHB, generating the first membrane-bound Q intermediate 3-octaprenyl-4-hydroxybenzoate. The protein is 4-hydroxybenzoate octaprenyltransferase of Saccharophagus degradans (strain 2-40 / ATCC 43961 / DSM 17024).